The chain runs to 382 residues: Galactokinase (382 aa).

E34–D37 is a substrate binding site. An ATP-binding site is contributed by G124–S130. Residues S130 and E162 each contribute to the Mg(2+) site. Catalysis depends on D174, which acts as the Proton acceptor. Y223 lines the substrate pocket.

This sequence belongs to the GHMP kinase family. GalK subfamily.

It localises to the cytoplasm. The enzyme catalyses alpha-D-galactose + ATP = alpha-D-galactose 1-phosphate + ADP + H(+). It participates in carbohydrate metabolism; galactose metabolism. Functionally, catalyzes the transfer of the gamma-phosphate of ATP to D-galactose to form alpha-D-galactose-1-phosphate (Gal-1-P). The sequence is that of Galactokinase from Salmonella schwarzengrund (strain CVM19633).